We begin with the raw amino-acid sequence, 215 residues long: Phosphatidylserine decarboxylase proenzyme (215 aa).

The Schiff-base intermediate with substrate; via pyruvic acid role is filled by serine 184. Serine 184 carries the post-translational modification Pyruvic acid (Ser); by autocatalysis.

Belongs to the phosphatidylserine decarboxylase family. PSD-A subfamily. As to quaternary structure, heterodimer of a large membrane-associated beta subunit and a small pyruvoyl-containing alpha subunit. The cofactor is pyruvate. Is synthesized initially as an inactive proenzyme. Formation of the active enzyme involves a self-maturation process in which the active site pyruvoyl group is generated from an internal serine residue via an autocatalytic post-translational modification. Two non-identical subunits are generated from the proenzyme in this reaction, and the pyruvate is formed at the N-terminus of the alpha chain, which is derived from the carboxyl end of the proenzyme. The post-translation cleavage follows an unusual pathway, termed non-hydrolytic serinolysis, in which the side chain hydroxyl group of the serine supplies its oxygen atom to form the C-terminus of the beta chain, while the remainder of the serine residue undergoes an oxidative deamination to produce ammonia and the pyruvoyl prosthetic group on the alpha chain.

The protein resides in the cell membrane. It carries out the reaction a 1,2-diacyl-sn-glycero-3-phospho-L-serine + H(+) = a 1,2-diacyl-sn-glycero-3-phosphoethanolamine + CO2. It functions in the pathway phospholipid metabolism; phosphatidylethanolamine biosynthesis; phosphatidylethanolamine from CDP-diacylglycerol: step 2/2. Functionally, catalyzes the formation of phosphatidylethanolamine (PtdEtn) from phosphatidylserine (PtdSer). This Ralstonia nicotianae (strain ATCC BAA-1114 / GMI1000) (Ralstonia solanacearum) protein is Phosphatidylserine decarboxylase proenzyme.